A 228-amino-acid chain; its full sequence is MTQDELKALVAQAAADYVKQEVPEGAVLGVGTGSTANLFIDAVAAFKDRFAGAVSSSEASTRRLQQHGFKVLDLNEVDDIPVYVDGADEIDASGAMIKGGGGALTREKIVASVAGRFVCIADGSKLVETMGAFPLPVEVIPMARAAVARQVAALGGQPRLRMNKDGGIYKTDNGNVILDVSGLKITDPRGLEQSINQIPGVVTVGLFALRGANVLLLGTGEGVQRTDY.

Substrate is bound by residues 32-35, 85-88, and 98-101; these read TGST, DGAD, and KGGG. Glutamate 107 (proton acceptor) is an active-site residue. Residue lysine 125 participates in substrate binding.

The protein belongs to the ribose 5-phosphate isomerase family. Homodimer.

It catalyses the reaction aldehydo-D-ribose 5-phosphate = D-ribulose 5-phosphate. Its pathway is carbohydrate degradation; pentose phosphate pathway; D-ribose 5-phosphate from D-ribulose 5-phosphate (non-oxidative stage): step 1/1. Its function is as follows. Catalyzes the reversible conversion of ribose-5-phosphate to ribulose 5-phosphate. This is Ribose-5-phosphate isomerase A from Cupriavidus pinatubonensis (strain JMP 134 / LMG 1197) (Cupriavidus necator (strain JMP 134)).